Consider the following 403-residue polypeptide: Serine/threonine transporter SstT (403 aa).

A run of 9 helical transmembrane segments spans residues 14-34, 44-64, 79-99, 138-158, 175-195, 214-234, 295-315, 327-347, and 353-373; these read VTQIVIGLLAGIALALLAPAI, VFVSALKAVAPVLVFILVMAS, ILWLYLLGTFAAAVVAVFASM, ALLNANFIGVLTWAIGLGVAL, GVTLIVRVVIRFAPLGIFGLV, LAVLIGCMLFVALVMNPLIVF, MAGAAITITVLTLAAVHTLGI, VVAAVCACGASGVAGGSLLLI, and LFGIPSEIAMQVVAVGFIIGV.

This sequence belongs to the dicarboxylate/amino acid:cation symporter (DAACS) (TC 2.A.23) family.

It localises to the cell inner membrane. The enzyme catalyses L-serine(in) + Na(+)(in) = L-serine(out) + Na(+)(out). It catalyses the reaction L-threonine(in) + Na(+)(in) = L-threonine(out) + Na(+)(out). Functionally, involved in the import of serine and threonine into the cell, with the concomitant import of sodium (symport system). In Pseudomonas putida (strain ATCC 47054 / DSM 6125 / CFBP 8728 / NCIMB 11950 / KT2440), this protein is Serine/threonine transporter SstT.